A 21-amino-acid polypeptide reads, in one-letter code: Natriuretic peptide TsNP (21 aa).

C5 and C21 are oxidised to a cystine.

Expressed by the venom gland.

It localises to the secreted. Functionally, scorpion venom natriuretic peptide that increases the perfusion pressure, glomerular filtration rate and urinary flow in the isolated perfused rat kidney assay. Induces a decrease of the percentages of renal transport for sodium, potassium and chloride and an increase of the urinary cGMP concentration. Also down-regulates the mRNA expression of natriuretic peptide receptor 1 (NPR1) in the kidneys whereas it up-regulates those of NPR2, NPR3 and guanylyl cyclase C (GUCY2C) mRNAs. May exhibit hypotensive and vasodepressor activities. The chain is Natriuretic peptide TsNP from Tityus serrulatus (Brazilian scorpion).